Reading from the N-terminus, the 339-residue chain is Biotin synthase (339 aa).

The Radical SAM core domain occupies 53–271 (NAIQMSRLLS…IALARILMPR (219 aa)). [4Fe-4S] cluster-binding residues include Cys68, Cys72, and Cys75. 4 residues coordinate [2Fe-2S] cluster: Cys112, Cys143, Cys203, and Arg275.

This sequence belongs to the radical SAM superfamily. Biotin synthase family. Homodimer. The cofactor is [4Fe-4S] cluster. It depends on [2Fe-2S] cluster as a cofactor.

The catalysed reaction is (4R,5S)-dethiobiotin + (sulfur carrier)-SH + 2 reduced [2Fe-2S]-[ferredoxin] + 2 S-adenosyl-L-methionine = (sulfur carrier)-H + biotin + 2 5'-deoxyadenosine + 2 L-methionine + 2 oxidized [2Fe-2S]-[ferredoxin]. It functions in the pathway cofactor biosynthesis; biotin biosynthesis; biotin from 7,8-diaminononanoate: step 2/2. Catalyzes the conversion of dethiobiotin (DTB) to biotin by the insertion of a sulfur atom into dethiobiotin via a radical-based mechanism. The sequence is that of Biotin synthase from Agrobacterium fabrum (strain C58 / ATCC 33970) (Agrobacterium tumefaciens (strain C58)).